A 403-amino-acid polypeptide reads, in one-letter code: MSHRKFSAPRHGSLGFLPRKRSSRHRGKVKSFPKDDSSKPVHLTAFLGYKAGMTHIVREVDRPGSKVNKKEVVEAVTIVETPPMVIVGIVGYVETPRGLRTFKTIFAEHISDECKRRFYKNWHKSKKKAFTKYCKKWQDADGKKQLERDFSSMKKYCQVIRVIAHTQMRLLPLRQKKAHLMEVQVNGGTVAEKLDWARERLEQQVPVSQVFGQDEMIDVIGVTKGKGYKGVTSRWHTKKLPRKTHRGLRKVACIGAWHPARVAFSVARAGQKGYHHRTEINKKIYKIGQGYLIKDGKLIKNNASTDYDLSDKSINPLGGFVHYGEVTNDFVMLKGCVVGTKKRVLTLRKSLLVQTKRRALEKIDLKFIDTTSKFGHGRFQTVEEKKAFMGPLKKDRIAKEEGA.

Residues 1-38 form a disordered region; the sequence is MSHRKFSAPRHGSLGFLPRKRSSRHRGKVKSFPKDDSS. Ser13 carries the post-translational modification Phosphoserine. Over residues 18 to 31 the composition is skewed to basic residues; sequence PRKRSSRHRGKVKS. Lys39 participates in a covalent cross-link: Glycyl lysine isopeptide (Lys-Gly) (interchain with G-Cter in SUMO2). N6-acetyllysine is present on Lys136. Residues Lys224 and Lys226 each participate in a glycyl lysine isopeptide (Lys-Gly) (interchain with G-Cter in SUMO2) cross-link. His245 carries the tele-methylhistidine modification. N6-acetyllysine; alternate is present on residues Lys286 and Lys294. A Glycyl lysine isopeptide (Lys-Gly) (interchain with G-Cter in SUMO2); alternate cross-link involves residue Lys286. A Glycyl lysine isopeptide (Lys-Gly) (interchain with G-Cter in SUMO1); alternate cross-link involves residue Lys294. Ser304 is subject to Phosphoserine. Position 366 is an N6-acetyllysine; alternate (Lys366). Lys366 participates in a covalent cross-link: Glycyl lysine isopeptide (Lys-Gly) (interchain with G-Cter in SUMO2); alternate. The residue at position 373 (Lys373) is an N6-acetyllysine. Residues Lys386, Lys393, and Lys399 each participate in a glycyl lysine isopeptide (Lys-Gly) (interchain with G-Cter in SUMO2) cross-link.

It belongs to the universal ribosomal protein uL3 family. As to quaternary structure, component of the large ribosomal subunit. Interacts with DHX33. Constitutively monomethylated at His-245 by METTL18. Methylation at His-245 regulates translation elongation by slowing ribosome traversal on tyrosine codons: slower elongation provides enough time for proper folding of synthesized proteins and prevents cellular aggregation of tyrosine-rich proteins It is not required for incorporation of RPL3 into ribosomes.

It localises to the nucleus. The protein localises to the nucleolus. It is found in the cytoplasm. Its function is as follows. Component of the large ribosomal subunit. The ribosome is a large ribonucleoprotein complex responsible for the synthesis of proteins in the cell. The polypeptide is Large ribosomal subunit protein uL3 (RPL3) (Bos taurus (Bovine)).